The following is a 69-amino-acid chain: Regulatory protein MokC (69 aa).

Residues 24–44 (KAMIVALIVICITAVVAALVT) traverse the membrane as a helical segment.

It belongs to the Hok/Gef family.

It localises to the cell inner membrane. Its function is as follows. Might be the toxic component of a type I toxin-antitoxin (TA) system. Regulatory peptide which completely overlaps hokC and enables hokC expression. The chain is Regulatory protein MokC (mokC) from Escherichia coli (strain K12).